The sequence spans 101 residues: Putative pterin-4-alpha-carbinolamine dehydratase (101 aa).

It belongs to the pterin-4-alpha-carbinolamine dehydratase family.

The catalysed reaction is (4aS,6R)-4a-hydroxy-L-erythro-5,6,7,8-tetrahydrobiopterin = (6R)-L-erythro-6,7-dihydrobiopterin + H2O. In Streptomyces coelicolor (strain ATCC BAA-471 / A3(2) / M145), this protein is Putative pterin-4-alpha-carbinolamine dehydratase.